A 185-amino-acid polypeptide reads, in one-letter code: Elongation factor P (185 aa).

This sequence belongs to the elongation factor P family.

Its subcellular location is the cytoplasm. The protein operates within protein biosynthesis; polypeptide chain elongation. In terms of biological role, involved in peptide bond synthesis. Stimulates efficient translation and peptide-bond synthesis on native or reconstituted 70S ribosomes in vitro. Probably functions indirectly by altering the affinity of the ribosome for aminoacyl-tRNA, thus increasing their reactivity as acceptors for peptidyl transferase. The sequence is that of Elongation factor P from Staphylococcus saprophyticus subsp. saprophyticus (strain ATCC 15305 / DSM 20229 / NCIMB 8711 / NCTC 7292 / S-41).